The primary structure comprises 342 residues: Histidinol-phosphate aminotransferase 2 (342 aa).

The residue at position 206 (lysine 206) is an N6-(pyridoxal phosphate)lysine.

This sequence belongs to the class-II pyridoxal-phosphate-dependent aminotransferase family. Histidinol-phosphate aminotransferase subfamily. Requires pyridoxal 5'-phosphate as cofactor.

The catalysed reaction is L-histidinol phosphate + 2-oxoglutarate = 3-(imidazol-4-yl)-2-oxopropyl phosphate + L-glutamate. It functions in the pathway amino-acid biosynthesis; L-histidine biosynthesis; L-histidine from 5-phospho-alpha-D-ribose 1-diphosphate: step 7/9. The chain is Histidinol-phosphate aminotransferase 2 (hisC2) from Archaeoglobus fulgidus (strain ATCC 49558 / DSM 4304 / JCM 9628 / NBRC 100126 / VC-16).